Reading from the N-terminus, the 417-residue chain is Glutamyl-tRNA reductase (417 aa).

Residues 49-52 (TCNR), Ser105, 110-112 (EPQ), and Gln116 each bind substrate. Cys50 functions as the Nucleophile in the catalytic mechanism. 185-190 (GAGEMI) serves as a coordination point for NADP(+).

Belongs to the glutamyl-tRNA reductase family. In terms of assembly, homodimer.

The enzyme catalyses (S)-4-amino-5-oxopentanoate + tRNA(Glu) + NADP(+) = L-glutamyl-tRNA(Glu) + NADPH + H(+). It functions in the pathway porphyrin-containing compound metabolism; protoporphyrin-IX biosynthesis; 5-aminolevulinate from L-glutamyl-tRNA(Glu): step 1/2. In terms of biological role, catalyzes the NADPH-dependent reduction of glutamyl-tRNA(Glu) to glutamate 1-semialdehyde (GSA). In Azoarcus sp. (strain BH72), this protein is Glutamyl-tRNA reductase.